Consider the following 390-residue polypeptide: 8-amino-7-oxononanoate synthase (390 aa).

Residue R19 participates in substrate binding. Position 106 to 107 (106 to 107) interacts with pyridoxal 5'-phosphate; that stretch reads GY. A substrate-binding site is contributed by H131. The pyridoxal 5'-phosphate site is built by S176, H204, and T233. K236 carries the post-translational modification N6-(pyridoxal phosphate)lysine. T350 contacts substrate.

It belongs to the class-II pyridoxal-phosphate-dependent aminotransferase family. BioF subfamily. As to quaternary structure, homodimer. It depends on pyridoxal 5'-phosphate as a cofactor.

It carries out the reaction 6-carboxyhexanoyl-[ACP] + L-alanine + H(+) = (8S)-8-amino-7-oxononanoate + holo-[ACP] + CO2. It functions in the pathway cofactor biosynthesis; biotin biosynthesis. Functionally, catalyzes the decarboxylative condensation of pimeloyl-[acyl-carrier protein] and L-alanine to produce 8-amino-7-oxononanoate (AON), [acyl-carrier protein], and carbon dioxide. This Pseudomonas entomophila (strain L48) protein is 8-amino-7-oxononanoate synthase.